The chain runs to 260 residues: uncharacterized protein (260 aa).

The N-terminal stretch at 1–22 is a signal peptide; the sequence is MGYSKRFALYISILILIVMVAG. The N-palmitoyl cysteine moiety is linked to residue C23. A lipid anchor (S-diacylglycerol cysteine) is attached at C23.

Belongs to the staphylococcal tandem lipoprotein family.

Its subcellular location is the cell membrane. This is an uncharacterized protein from Staphylococcus aureus (strain N315).